The sequence spans 187 residues: MMLLDLEEKTRVLIEDIVERSAIGSGSIFVLGLSSSEVIGGIIGKASSREIGQRIVKTILEVLEPKGIYLAVQGCEHLNRALVVERELALAKDLEIVNVLPTLHAGGSGQLAAFDYMEDPVEVEEILAQAGIDIGDTSIGMHVKRVQVPLRPIISELGGAHVTALASRPKLIGGARAEYLADPIRKN.

The protein belongs to the UPF0340 family.

This Streptococcus thermophilus (strain CNRZ 1066) protein is UPF0340 protein str1894.